The chain runs to 158 residues: MAFDETYNEPESTEVLVKSLDPEHPALLRYAHAGDAGADLITTVDVTLKPFERALVPTGVAIALPAGYVALVHPRSGLAAKQGVTVLNAPGTVDAGYRGEIKVPLINLDPKHTAVFHPGDRIAQLVIQRYVEARFIPAETLPGSDRAERGFGSTGVAS.

Residues 75–77 (RSG), Asn-88, 92–94 (TVD), and Lys-102 contribute to the substrate site.

The protein belongs to the dUTPase family. The cofactor is Mg(2+).

The catalysed reaction is dUTP + H2O = dUMP + diphosphate + H(+). It participates in pyrimidine metabolism; dUMP biosynthesis; dUMP from dCTP (dUTP route): step 2/2. Its function is as follows. This enzyme is involved in nucleotide metabolism: it produces dUMP, the immediate precursor of thymidine nucleotides and it decreases the intracellular concentration of dUTP so that uracil cannot be incorporated into DNA. The chain is Deoxyuridine 5'-triphosphate nucleotidohydrolase from Bifidobacterium longum subsp. infantis (strain ATCC 15697 / DSM 20088 / JCM 1222 / NCTC 11817 / S12).